A 255-amino-acid chain; its full sequence is 5-oxoprolinase subunit A (255 aa).

It belongs to the LamB/PxpA family. In terms of assembly, forms a complex composed of PxpA, PxpB and PxpC.

It carries out the reaction 5-oxo-L-proline + ATP + 2 H2O = L-glutamate + ADP + phosphate + H(+). Its function is as follows. Catalyzes the cleavage of 5-oxoproline to form L-glutamate coupled to the hydrolysis of ATP to ADP and inorganic phosphate. The polypeptide is 5-oxoprolinase subunit A (Nitrobacter winogradskyi (strain ATCC 25391 / DSM 10237 / CIP 104748 / NCIMB 11846 / Nb-255)).